A 162-amino-acid polypeptide reads, in one-letter code: Putative pre-16S rRNA nuclease (162 aa).

It belongs to the YqgF nuclease family.

It is found in the cytoplasm. In terms of biological role, could be a nuclease involved in processing of the 5'-end of pre-16S rRNA. This Brucella melitensis biotype 2 (strain ATCC 23457) protein is Putative pre-16S rRNA nuclease.